The primary structure comprises 227 residues: MAHPVQLSLQDATSPIMEELITFHDHAFMAMSLISFLVLYALALTLTTKLTNTNITDAQEMETIWTILPAVILILIALPSLRVLYLTDEVNDPSLTIKSIGHQWYWTYEYTDYGGLIFNSYMLPPLFLKPGDLRLLEVDNRVVLPIEAPVRMMITSQDVLHSWTIPTLGLKTDAVPGRLNQTVFTATRPGVYYGQCSEICGANHSFMPIVADLIPLKIFEMGPVFTL.

At 1-14 the chain is on the mitochondrial intermembrane side; that stretch reads MAHPVQLSLQDATS. The chain crosses the membrane as a helical span at residues 15 to 45; that stretch reads PIMEELITFHDHAFMAMSLISFLVLYALALT. Residues 46–59 lie on the Mitochondrial matrix side of the membrane; that stretch reads LTTKLTNTNITDAQ. The helical transmembrane segment at 60-87 threads the bilayer; sequence EMETIWTILPAVILILIALPSLRVLYLT. Residues 88–227 are Mitochondrial intermembrane-facing; sequence DEVNDPSLTI…IFEMGPVFTL (140 aa). Cu cation contacts are provided by His-161, Cys-196, Glu-198, Cys-200, His-204, and Met-207. Residue Glu-198 participates in Mg(2+) binding.

Belongs to the cytochrome c oxidase subunit 2 family. As to quaternary structure, component of the cytochrome c oxidase (complex IV, CIV), a multisubunit enzyme composed of 14 subunits. The complex is composed of a catalytic core of 3 subunits MT-CO1, MT-CO2 and MT-CO3, encoded in the mitochondrial DNA, and 11 supernumerary subunits COX4I, COX5A, COX5B, COX6A, COX6B, COX6C, COX7A, COX7B, COX7C, COX8 and NDUFA4, which are encoded in the nuclear genome. The complex exists as a monomer or a dimer and forms supercomplexes (SCs) in the inner mitochondrial membrane with NADH-ubiquinone oxidoreductase (complex I, CI) and ubiquinol-cytochrome c oxidoreductase (cytochrome b-c1 complex, complex III, CIII), resulting in different assemblies (supercomplex SCI(1)III(2)IV(1) and megacomplex MCI(2)III(2)IV(2)). Found in a complex with TMEM177, COA6, COX18, COX20, SCO1 and SCO2. Interacts with TMEM177 in a COX20-dependent manner. Interacts with COX20. Interacts with COX16. Cu cation is required as a cofactor.

Its subcellular location is the mitochondrion inner membrane. The catalysed reaction is 4 Fe(II)-[cytochrome c] + O2 + 8 H(+)(in) = 4 Fe(III)-[cytochrome c] + 2 H2O + 4 H(+)(out). Functionally, component of the cytochrome c oxidase, the last enzyme in the mitochondrial electron transport chain which drives oxidative phosphorylation. The respiratory chain contains 3 multisubunit complexes succinate dehydrogenase (complex II, CII), ubiquinol-cytochrome c oxidoreductase (cytochrome b-c1 complex, complex III, CIII) and cytochrome c oxidase (complex IV, CIV), that cooperate to transfer electrons derived from NADH and succinate to molecular oxygen, creating an electrochemical gradient over the inner membrane that drives transmembrane transport and the ATP synthase. Cytochrome c oxidase is the component of the respiratory chain that catalyzes the reduction of oxygen to water. Electrons originating from reduced cytochrome c in the intermembrane space (IMS) are transferred via the dinuclear copper A center (CU(A)) of subunit 2 and heme A of subunit 1 to the active site in subunit 1, a binuclear center (BNC) formed by heme A3 and copper B (CU(B)). The BNC reduces molecular oxygen to 2 water molecules using 4 electrons from cytochrome c in the IMS and 4 protons from the mitochondrial matrix. The sequence is that of Cytochrome c oxidase subunit 2 (MT-CO2) from Macaca fascicularis (Crab-eating macaque).